We begin with the raw amino-acid sequence, 390 residues long: Queuine tRNA-ribosyltransferase (390 aa).

Aspartate 90 acts as the Proton acceptor in catalysis. Residues 90 to 94 (DSGGF), aspartate 144, glutamine 197, and glycine 224 contribute to the substrate site. The interval 255–261 (GVGTPED) is RNA binding. The Nucleophile role is filled by aspartate 274. The segment at 279–283 (TRNAR) is RNA binding; important for wobble base 34 recognition. The Zn(2+) site is built by cysteine 312, cysteine 314, cysteine 317, and histidine 354.

This sequence belongs to the queuine tRNA-ribosyltransferase family. As to quaternary structure, homodimer. Within each dimer, one monomer is responsible for RNA recognition and catalysis, while the other monomer binds to the replacement base PreQ1. It depends on Zn(2+) as a cofactor.

The catalysed reaction is 7-aminomethyl-7-carbaguanine + guanosine(34) in tRNA = 7-aminomethyl-7-carbaguanosine(34) in tRNA + guanine. It functions in the pathway tRNA modification; tRNA-queuosine biosynthesis. Functionally, catalyzes the base-exchange of a guanine (G) residue with the queuine precursor 7-aminomethyl-7-deazaguanine (PreQ1) at position 34 (anticodon wobble position) in tRNAs with GU(N) anticodons (tRNA-Asp, -Asn, -His and -Tyr). Catalysis occurs through a double-displacement mechanism. The nucleophile active site attacks the C1' of nucleotide 34 to detach the guanine base from the RNA, forming a covalent enzyme-RNA intermediate. The proton acceptor active site deprotonates the incoming PreQ1, allowing a nucleophilic attack on the C1' of the ribose to form the product. After dissociation, two additional enzymatic reactions on the tRNA convert PreQ1 to queuine (Q), resulting in the hypermodified nucleoside queuosine (7-(((4,5-cis-dihydroxy-2-cyclopenten-1-yl)amino)methyl)-7-deazaguanosine). In Leptothrix cholodnii (strain ATCC 51168 / LMG 8142 / SP-6) (Leptothrix discophora (strain SP-6)), this protein is Queuine tRNA-ribosyltransferase.